The sequence spans 193 residues: 3-isopropylmalate dehydratase small subunit (193 aa).

It belongs to the LeuD family. LeuD type 1 subfamily. Heterodimer of LeuC and LeuD.

The enzyme catalyses (2R,3S)-3-isopropylmalate = (2S)-2-isopropylmalate. Its pathway is amino-acid biosynthesis; L-leucine biosynthesis; L-leucine from 3-methyl-2-oxobutanoate: step 2/4. Functionally, catalyzes the isomerization between 2-isopropylmalate and 3-isopropylmalate, via the formation of 2-isopropylmaleate. This Listeria monocytogenes serotype 4b (strain CLIP80459) protein is 3-isopropylmalate dehydratase small subunit.